Here is a 380-residue protein sequence, read N- to C-terminus: Glycerate kinase (380 aa).

This sequence belongs to the glycerate kinase type-1 family.

It carries out the reaction (R)-glycerate + ATP = (2R)-3-phosphoglycerate + ADP + H(+). This chain is Glycerate kinase (glxK), found in Halalkalibacterium halodurans (strain ATCC BAA-125 / DSM 18197 / FERM 7344 / JCM 9153 / C-125) (Bacillus halodurans).